A 131-amino-acid chain; its full sequence is Small ribosomal subunit protein uS8c (131 aa).

This sequence belongs to the universal ribosomal protein uS8 family. In terms of assembly, part of the 30S ribosomal subunit.

The protein resides in the plastid. It is found in the chloroplast. In terms of biological role, one of the primary rRNA binding proteins, it binds directly to 16S rRNA central domain where it helps coordinate assembly of the platform of the 30S subunit. The protein is Small ribosomal subunit protein uS8c (rps8) of Phalaenopsis aphrodite subsp. formosana (Moth orchid).